We begin with the raw amino-acid sequence, 373 residues long: 3',5'-bisphosphate nucleotidase AHL (373 aa).

D52 (proton acceptor) is an active-site residue. Mg(2+) contacts are provided by E77, D144, V146, and D147. The Proton acceptor role is filled by T149. Positions 149, 281, 284, 298, and 310 each coordinate adenosine 3',5'-bisphosphate. AMP contacts are provided by S281, K284, K298, and D310. Mg(2+) is bound at residue D310.

Belongs to the inositol monophosphatase superfamily. The cofactor is Mg(2+). Expressed in roots, leaves, stems, flowers and siliques.

The enzyme catalyses adenosine 3',5'-bisphosphate + H2O = AMP + phosphate. The catalysed reaction is 3'-phosphoadenylyl sulfate + H2O = adenosine 5'-phosphosulfate + phosphate. Inhibited by Li(+) (IC(50)=10 mM), Na(+) (IC(50)=50 mM) and Ca(2+) (IC(50)=0.06 mM). Its function is as follows. Phosphatase that converts adenosine 3'-phosphate 5'-phosphosulfate (PAPS) to adenosine 5'-phosphosulfate (APS) and 3'-phosphoadenosine 5'-phosphate (3'-PAP) to AMP. May regulate the flux of sulfur in the sulfur-activation pathway by converting PAPS to APS. Prevents both the toxicity of PAP on RNA processing enzymes as well as the product inhibition by PAP of sulfate conjugation. The protein is 3',5'-bisphosphate nucleotidase AHL of Arabidopsis thaliana (Mouse-ear cress).